We begin with the raw amino-acid sequence, 131 residues long: Nitrogenase-stabilizing/protective protein NifW (131 aa).

The protein belongs to the NifW family. As to quaternary structure, homotrimer; associates with NifD.

May protect the nitrogenase Fe-Mo protein from oxidative damage. In Frankia alni (strain DSM 45986 / CECT 9034 / ACN14a), this protein is Nitrogenase-stabilizing/protective protein NifW.